A 129-amino-acid polypeptide reads, in one-letter code: MAFEFPASFRFADSHEYANADGELVRVGISAFAVDQLGDIVFVDLPDVGDSLDKGATFGSVESVKAVEDMYAPVAGEVVQRNEAVLASPEELQNDPHGEGWLLVLRPSDPSQLEALMDAGTYGTKVNAG.

The Lipoyl-binding domain occupies 24–106 (LVRVGISAFA…HGEGWLLVLR (83 aa)). The residue at position 65 (Lys-65) is an N6-lipoyllysine.

It belongs to the GcvH family. In terms of assembly, the glycine cleavage system is composed of four proteins: P, T, L and H. The cofactor is (R)-lipoate.

Functionally, the glycine cleavage system catalyzes the degradation of glycine. The H protein shuttles the methylamine group of glycine from the P protein to the T protein. The polypeptide is Glycine cleavage system H protein (Parasynechococcus marenigrum (strain WH8102)).